We begin with the raw amino-acid sequence, 227 residues long: Cytochrome c oxidase subunit 2 (227 aa).

Residues 1 to 14 lie on the Mitochondrial intermembrane side of the membrane; it reads MAHPVQLSLQDATS. The chain crosses the membrane as a helical span at residues 15 to 45; it reads PIMEELITFHDHAFMAMSLISFLVLYALALT. The Mitochondrial matrix segment spans residues 46 to 59; that stretch reads LTTKLTNTNITDAQ. A helical transmembrane segment spans residues 60–87; the sequence is EMETIWTILPAVILILIALPSLRVLYLT. Residues 88–227 are Mitochondrial intermembrane-facing; that stretch reads DEVNDPSLTI…IFEMGPVFTL (140 aa). Residues His161, Cys196, Glu198, Cys200, His204, and Met207 each coordinate Cu cation. A Mg(2+)-binding site is contributed by Glu198.

Belongs to the cytochrome c oxidase subunit 2 family. In terms of assembly, component of the cytochrome c oxidase (complex IV, CIV), a multisubunit enzyme composed of 14 subunits. The complex is composed of a catalytic core of 3 subunits MT-CO1, MT-CO2 and MT-CO3, encoded in the mitochondrial DNA, and 11 supernumerary subunits COX4I, COX5A, COX5B, COX6A, COX6B, COX6C, COX7A, COX7B, COX7C, COX8 and NDUFA4, which are encoded in the nuclear genome. The complex exists as a monomer or a dimer and forms supercomplexes (SCs) in the inner mitochondrial membrane with NADH-ubiquinone oxidoreductase (complex I, CI) and ubiquinol-cytochrome c oxidoreductase (cytochrome b-c1 complex, complex III, CIII), resulting in different assemblies (supercomplex SCI(1)III(2)IV(1) and megacomplex MCI(2)III(2)IV(2)). Found in a complex with TMEM177, COA6, COX18, COX20, SCO1 and SCO2. Interacts with TMEM177 in a COX20-dependent manner. Interacts with COX20. Interacts with COX16. Requires Cu cation as cofactor.

The protein localises to the mitochondrion inner membrane. The enzyme catalyses 4 Fe(II)-[cytochrome c] + O2 + 8 H(+)(in) = 4 Fe(III)-[cytochrome c] + 2 H2O + 4 H(+)(out). Its function is as follows. Component of the cytochrome c oxidase, the last enzyme in the mitochondrial electron transport chain which drives oxidative phosphorylation. The respiratory chain contains 3 multisubunit complexes succinate dehydrogenase (complex II, CII), ubiquinol-cytochrome c oxidoreductase (cytochrome b-c1 complex, complex III, CIII) and cytochrome c oxidase (complex IV, CIV), that cooperate to transfer electrons derived from NADH and succinate to molecular oxygen, creating an electrochemical gradient over the inner membrane that drives transmembrane transport and the ATP synthase. Cytochrome c oxidase is the component of the respiratory chain that catalyzes the reduction of oxygen to water. Electrons originating from reduced cytochrome c in the intermembrane space (IMS) are transferred via the dinuclear copper A center (CU(A)) of subunit 2 and heme A of subunit 1 to the active site in subunit 1, a binuclear center (BNC) formed by heme A3 and copper B (CU(B)). The BNC reduces molecular oxygen to 2 water molecules using 4 electrons from cytochrome c in the IMS and 4 protons from the mitochondrial matrix. The polypeptide is Cytochrome c oxidase subunit 2 (MT-CO2) (Macaca fascicularis (Crab-eating macaque)).